The sequence spans 199 residues: Photosystem I reaction center subunit XI (199 aa).

A run of 2 helical transmembrane segments spans residues V108–L128 and F165–L185.

The protein belongs to the PsaL family.

The protein resides in the cellular thylakoid membrane. The chain is Photosystem I reaction center subunit XI from Prochlorococcus marinus (strain MIT 9215).